The sequence spans 374 residues: Spore germination protein B3 (374 aa).

The signal sequence occupies residues 1–19; it reads MKTASKFSVMFFMLLALCG. Cys20 carries the N-palmitoyl cysteine lipid modification. Residue Cys20 is the site of S-diacylglycerol cysteine attachment.

The protein belongs to the GerABKC lipoprotein family.

Its subcellular location is the cell membrane. Involved in the response to the germinative mixture of L-asparagine, glucose, fructose and potassium ions (AGFK). Cannot stimulate germination in the absence of gerD and gerK gene products (fructose and glucose receptors respectively). This is Spore germination protein B3 (gerBC) from Bacillus subtilis (strain 168).